Reading from the N-terminus, the 247-residue chain is Ribosomal RNA large subunit methyltransferase E (247 aa).

The interval 1–21 (MKVNPKNSPKDNLKDSPKVSA) is disordered. Positions 8 to 17 (SPKDNLKDSP) are enriched in basic and acidic residues. Residues Gly80, Trp82, Asp108, Asp124, and Asp153 each coordinate S-adenosyl-L-methionine. Lys193 (proton acceptor) is an active-site residue.

It belongs to the class I-like SAM-binding methyltransferase superfamily. RNA methyltransferase RlmE family.

Its subcellular location is the cytoplasm. The enzyme catalyses uridine(2552) in 23S rRNA + S-adenosyl-L-methionine = 2'-O-methyluridine(2552) in 23S rRNA + S-adenosyl-L-homocysteine + H(+). Its function is as follows. Specifically methylates the uridine in position 2552 of 23S rRNA at the 2'-O position of the ribose in the fully assembled 50S ribosomal subunit. The protein is Ribosomal RNA large subunit methyltransferase E of Polaromonas sp. (strain JS666 / ATCC BAA-500).